The sequence spans 92 residues: Small ribosomal subunit protein uS19c (92 aa).

This sequence belongs to the universal ribosomal protein uS19 family.

It is found in the plastid. Its subcellular location is the chloroplast. In terms of biological role, protein S19 forms a complex with S13 that binds strongly to the 16S ribosomal RNA. This Chaetosphaeridium globosum (Charophycean green alga) protein is Small ribosomal subunit protein uS19c.